A 35-amino-acid chain; its full sequence is Tau-theraphotoxin-Pc1b (35 aa).

3 disulfide bridges follow: Cys-3–Cys-17, Cys-10–Cys-22, and Cys-16–Cys-29. Residue Phe-35 is modified to Phenylalanine amide.

Belongs to the neurotoxin 10 (Hwtx-1) family. 62 (Vatx) subfamily. In terms of tissue distribution, expressed by the venom gland.

The protein resides in the secreted. Its function is as follows. Selectively activates the mammalian capsaicin receptor TRPV1, a non-selective cation channel expressed by sensory neurons of the pain pathway. Is more potent than VaTx1, but less potent than VaTx3. Interacts with distinct regions of the channel than capsaicin, since it only acts on the extracellular face of the channel, and capsaicin binds to the cytosolic side. Also activates avian TRPV1, which is insensitive to capsaicin. Produce weak inhibition on potassium channels Kv2.1/KCNB1. The protein is Tau-theraphotoxin-Pc1b of Psalmopoeus cambridgei (Trinidad chevron tarantula).